The sequence spans 208 residues: Ribosomal RNA small subunit methyltransferase G (208 aa).

S-adenosyl-L-methionine-binding positions include G74, L79, V125–E126, and R140.

Belongs to the methyltransferase superfamily. RNA methyltransferase RsmG family.

Its subcellular location is the cytoplasm. The catalysed reaction is guanosine(527) in 16S rRNA + S-adenosyl-L-methionine = N(7)-methylguanosine(527) in 16S rRNA + S-adenosyl-L-homocysteine. Its function is as follows. Specifically methylates the N7 position of guanine in position 527 of 16S rRNA. The sequence is that of Ribosomal RNA small subunit methyltransferase G from Shewanella denitrificans (strain OS217 / ATCC BAA-1090 / DSM 15013).